A 260-amino-acid polypeptide reads, in one-letter code: Hydroxyethylthiazole kinase 1 (260 aa).

Residue methionine 39 coordinates substrate. Positions 115 and 160 each coordinate ATP. Glycine 187 serves as a coordination point for substrate.

This sequence belongs to the Thz kinase family. Requires Mg(2+) as cofactor.

The catalysed reaction is 5-(2-hydroxyethyl)-4-methylthiazole + ATP = 4-methyl-5-(2-phosphooxyethyl)-thiazole + ADP + H(+). It participates in cofactor biosynthesis; thiamine diphosphate biosynthesis; 4-methyl-5-(2-phosphoethyl)-thiazole from 5-(2-hydroxyethyl)-4-methylthiazole: step 1/1. Catalyzes the phosphorylation of the hydroxyl group of 4-methyl-5-beta-hydroxyethylthiazole (THZ). This Streptococcus pneumoniae serotype 4 (strain ATCC BAA-334 / TIGR4) protein is Hydroxyethylthiazole kinase 1.